The following is a 1102-amino-acid chain: WASH complex subunit 4 (1102 aa).

This sequence belongs to the SWIP family. Component of the WASH complex.

Its subcellular location is the early endosome. Acts at least in part as component of the WASH complex which may regulate wash nucleation-promoting factor (NPF) activity and is required for its membrane targeting during endosomal sorting. During embryogenesis, not involved in the wash-dependent developmental migration of hemocytes anteriorly from the tail. The protein is WASH complex subunit 4 of Drosophila melanogaster (Fruit fly).